We begin with the raw amino-acid sequence, 617 residues long: uncharacterized protein (617 aa).

The 102-residue stretch at 33-134 (TEDDFRGEKF…FXNATKQKGS (102 aa)) folds into the B12-binding N-terminal domain. Methylcob(III)alamin is bound by residues Glu-84, 146–150 (GDVHD), His-149, Ser-194, Thr-198, and Ala-251. Residues 136-272 (NGKVVIATVK…NPEGRAALWE (137 aa)) form the B12-binding domain. Positions 288 to 617 (SKPLRKQLSI…MMKWLGVAMK (330 aa)) constitute an AdoMet activation domain. Residues Asp-337, Arg-528, and 583-584 (YF) contribute to the S-adenosyl-L-methionine site.

This sequence belongs to the vitamin-B12 dependent methionine synthase family.

This is an uncharacterized protein from Haemophilus influenzae (strain ATCC 51907 / DSM 11121 / KW20 / Rd).